Reading from the N-terminus, the 150-residue chain is uncharacterized protein (150 aa).

Residues 49 to 88 are disordered; sequence KEWAENASTDEIDDFLTHDDETERDADPSSGSGPELMNKA. A compositionally biased stretch (basic and acidic residues) spans 63–75; sequence FLTHDDETERDAD.

This is an uncharacterized protein from Bacillus subtilis (strain 168).